The chain runs to 373 residues: UDP-N-acetylglucosamine--N-acetylmuramyl-(pentapeptide) pyrophosphoryl-undecaprenol N-acetylglucosamine transferase (373 aa).

Residues 10-12 (TGG), Asn-124, Arg-166, Ser-196, and Gln-301 contribute to the UDP-N-acetyl-alpha-D-glucosamine site.

The protein belongs to the glycosyltransferase 28 family. MurG subfamily.

It localises to the cell membrane. The catalysed reaction is di-trans,octa-cis-undecaprenyl diphospho-N-acetyl-alpha-D-muramoyl-L-alanyl-D-glutamyl-meso-2,6-diaminopimeloyl-D-alanyl-D-alanine + UDP-N-acetyl-alpha-D-glucosamine = di-trans,octa-cis-undecaprenyl diphospho-[N-acetyl-alpha-D-glucosaminyl-(1-&gt;4)]-N-acetyl-alpha-D-muramoyl-L-alanyl-D-glutamyl-meso-2,6-diaminopimeloyl-D-alanyl-D-alanine + UDP + H(+). The protein operates within cell wall biogenesis; peptidoglycan biosynthesis. In terms of biological role, cell wall formation. Catalyzes the transfer of a GlcNAc subunit on undecaprenyl-pyrophosphoryl-MurNAc-pentapeptide (lipid intermediate I) to form undecaprenyl-pyrophosphoryl-MurNAc-(pentapeptide)GlcNAc (lipid intermediate II). The polypeptide is UDP-N-acetylglucosamine--N-acetylmuramyl-(pentapeptide) pyrophosphoryl-undecaprenol N-acetylglucosamine transferase (Desulforudis audaxviator (strain MP104C)).